Here is a 224-residue protein sequence, read N- to C-terminus: 7-cyano-7-deazaguanine synthase (224 aa).

Position 12–22 (12–22) interacts with ATP; the sequence is LSGGLDSSTVT. Zn(2+) is bound by residues cysteine 193, cysteine 201, cysteine 204, and cysteine 207.

It belongs to the QueC family. Requires Zn(2+) as cofactor.

It catalyses the reaction 7-carboxy-7-deazaguanine + NH4(+) + ATP = 7-cyano-7-deazaguanine + ADP + phosphate + H2O + H(+). Its pathway is purine metabolism; 7-cyano-7-deazaguanine biosynthesis. Functionally, catalyzes the ATP-dependent conversion of 7-carboxy-7-deazaguanine (CDG) to 7-cyano-7-deazaguanine (preQ(0)). The protein is 7-cyano-7-deazaguanine synthase of Prochlorococcus marinus (strain MIT 9312).